The chain runs to 340 residues: Functional amyloid subunit FapC (340 aa).

The signal sequence occupies residues 1–24 (MKATMVLTPLALAMAAVLSVSAYA). The FapC_R1 repeat unit spans residues 67–100 (NNASVSGSIKDASGNVGVNVAAGDNNQQANAAAL). Positions 101–133 (ASADASFVFGTATASTSVLQSGYGNTLNNYSNP) are linker 1. Residues 134–167 (NTASLSNSANNVSGNLGVNVAAGNFNQQKNDLAA) form a FapC_R2 repeat. The tract at residues 168–290 (AVSNGQYSTA…AIVGFKTPVT (123 aa)) is linker 2. Residues 291-324 (NNASLSNSLQNVSGNVGVNIAAGGGNQQSNSLSI) form a FapC_R3 repeat. Positions 328 to 331 (CSSC) match the Cys-X-X-Cys motif.

The protein belongs to the FapB/FapC family. As to quaternary structure, the major component of purified amyloid fibrils. Fibrils are resistant to boiling in 2% (weight/vol) SDS and require &gt;90% (vol/vol) formic acid to dissolve. Interacts with FapA in vitro.

Its subcellular location is the fimbrium. The protein resides in the secreted. Its function is as follows. The major functional amyloid subunit in this bacterium. Upon overexpression of the endogenous six-gene locus (fapA-fapF), cells form large clumps during liquid growth, make large amounts of biofilm and produce amyloid fibrils. This Pseudomonas aeruginosa (strain ATCC 15692 / DSM 22644 / CIP 104116 / JCM 14847 / LMG 12228 / 1C / PRS 101 / PAO1) protein is Functional amyloid subunit FapC.